Reading from the N-terminus, the 245-residue chain is Putative binding protein HI_1525 (245 aa).

The N-terminal stretch at 1 to 19 (MKKLVAVTSMILTTFSVQA) is a signal peptide. Positions 56 and 163 each coordinate molybdate.

It belongs to the bacterial solute-binding protein ModA family.

The protein localises to the periplasm. Its function is as follows. Probably involved in the binding-dependent system. This is Putative binding protein HI_1525 from Haemophilus influenzae (strain ATCC 51907 / DSM 11121 / KW20 / Rd).